Consider the following 354-residue polypeptide: Guanine nucleotide-binding protein subunit alpha-14 (354 aa).

The region spanning 33–354 is the G-alpha domain; the sequence is RELKLLLLGT…QLNLREFNLV (322 aa). Residues 36-49 are G1 motif; it reads KLLLLGTGESGKST. Residues 41-48, 175-181, 200-204, 269-272, and alanine 326 contribute to the GTP site; these read GTGESGKS, LRVRVPT, DVGGQ, and NKKD. 2 residues coordinate Mg(2+): serine 48 and threonine 181. Residues 173-181 form a G2 motif region; sequence DVLRVRVPT. Residues 196 to 205 form a G3 motif region; it reads FRMVDVGGQR. The segment at 265–272 is G4 motif; the sequence is ILFLNKKD. Positions 324–329 are G5 motif; that stretch reads TCATDT.

This sequence belongs to the G-alpha family. G(q) subfamily. As to quaternary structure, g proteins are composed of 3 units; alpha, beta and gamma. The alpha chain contains the guanine nucleotide binding site.

Its function is as follows. Guanine nucleotide-binding proteins (G proteins) are involved as modulators or transducers in various transmembrane signaling systems. Acts as an activator of phospholipase C. Mediates responses to trypsin. The protein is Guanine nucleotide-binding protein subunit alpha-14 (gna14) of Xenopus laevis (African clawed frog).